We begin with the raw amino-acid sequence, 443 residues long: Xaa-Pro dipeptidase (443 aa).

Residues aspartate 246, aspartate 257, histidine 339, glutamate 384, and glutamate 423 each contribute to the Mn(2+) site.

The protein belongs to the peptidase M24B family. Bacterial-type prolidase subfamily. It depends on Mn(2+) as a cofactor.

The catalysed reaction is Xaa-L-Pro dipeptide + H2O = an L-alpha-amino acid + L-proline. Splits dipeptides with a prolyl residue in the C-terminal position. This chain is Xaa-Pro dipeptidase, found in Escherichia coli O7:K1 (strain IAI39 / ExPEC).